The sequence spans 457 residues: Argininosuccinate lyase (457 aa).

The protein belongs to the lyase 1 family. Argininosuccinate lyase subfamily.

It is found in the cytoplasm. The enzyme catalyses 2-(N(omega)-L-arginino)succinate = fumarate + L-arginine. It functions in the pathway amino-acid biosynthesis; L-arginine biosynthesis; L-arginine from L-ornithine and carbamoyl phosphate: step 3/3. The polypeptide is Argininosuccinate lyase (Psychrobacter arcticus (strain DSM 17307 / VKM B-2377 / 273-4)).